We begin with the raw amino-acid sequence, 416 residues long: Iron/alpha-ketoglutarate-dependent dioxygenase asqJ (416 aa).

The tract at residues 1-53 (MGYPKAFTSSDSEPEPDLSRDLGNPVMGNPGVVSRSSSTVAQHSVRNNPTGPD) is disordered. The segment covering 34-50 (SRSSSTVAQHSVRNNPT) has biased composition (polar residues). Positions 242, 244, and 319 each coordinate Fe cation.

Belongs to the PhyH family. Homodimer. Fe cation is required as a cofactor.

The enzyme catalyses (-)-4'-methoxycyclopeptine + 2-oxoglutarate + O2 = (Z)-4'-methoxydehydrocyclopeptine + succinate + CO2 + H2O. It catalyses the reaction (Z)-4'-methoxydehydrocyclopeptine + 2-oxoglutarate + O2 = (-)-4'-methoxycyclopenine + succinate + CO2. It carries out the reaction (-)-cyclopeptine + 2-oxoglutarate + O2 = (Z)-dehydrocyclopeptine + succinate + CO2 + H2O. The catalysed reaction is (Z)-dehydrocyclopeptine + 2-oxoglutarate + O2 = (-)-cyclopenine + succinate + CO2. Its pathway is secondary metabolite biosynthesis. The protein operates within alkaloid biosynthesis. It functions in the pathway mycotoxin biosynthesis. Iron/alpha-ketoglutarate-dependent dioxygenase; part of the gene cluster that mediates the biosynthesis of the aspoquinolone mycotoxins. Within the pathway, the iron/alpha-ketoglutarate-dependent dioxygenase asqJ acts as a (-)-cyclopenine synthase that converts 4'-methoxycyclopeptin into 4'-methoxydehydrocyclopeptin through dehydrogenation to form a double bond between C-alpha and C-beta of the O-methyltyrosine side chain. AsqJ is a very unique dioxygenase which is capable of catalyzing radical-mediated dehydrogenation and epoxidation reactions sequentially on a 6,7-benzo-diazepinedione substrate in the 4'-methoxyviridicatin biosynthetic pathway. AsqJ is also capable of converting cyclopeptin into dehydrocyclopeptin. The first step of the pathway is catalyzed by the nonribosomal peptide synthetase asqK that condenses anthranilic acid and O-methyl-L-tyrosine to produce 4'-methoxycyclopeptin. 4'-methoxycyclopeptin is then converted to 4'-methoxydehydrocyclopeptin by the ketoglutarate-dependent dioxygenase asqJ. AsqJ also converts its first product 4'-methoxydehydrocyclopeptin to 4'-methoxycyclopenin. The following conversion of 4'-methoxycyclopenin into 4'-methoxyviridicatin is catalyzed by the cyclopenase asqI. 4'-methoxyviridicatin is the precursor of quinolone natural products, and is further converted to quinolinone B. The prenyltransferase asqH1 then catalyzes the canonical Friedel-Crafts alkylation of quinolinone B with dimethylallyl cation to yield dimethylallyl quinolone, which is subjected to FAD-dependent dehydrogenation by the FAD-linked oxidoreductase asqF to yield conjugated aryl diene. The delta(3') double bond then serves as the site of the second alkylation with DMAPP catalyzed by the prenyltransferase asqH2 to yield a carbenium ion intermediate, which can be attacked by H(2)O to yield a styrenyl quinolone containing a C3'-hydroxyprenyl chain. The FAD-dependent monooxygenase asqG performs epoxidation of the terminal C7'-C8' olefin. Finally, after dehydratation of the epoxide at C3 by asqC, the quinolone epoxide rearrangement protein asqO catalyzes an enzymatic 3-exo-tet cyclization to yield the cyclopropyl-THF ring system in aspoquinolone. The polypeptide is Iron/alpha-ketoglutarate-dependent dioxygenase asqJ (Emericella nidulans (strain FGSC A4 / ATCC 38163 / CBS 112.46 / NRRL 194 / M139) (Aspergillus nidulans)).